A 367-amino-acid chain; its full sequence is 4-hydroxy-3-methylbut-2-en-1-yl diphosphate synthase (flavodoxin) (367 aa).

[4Fe-4S] cluster is bound by residues cysteine 265, cysteine 268, cysteine 300, and glutamate 307.

This sequence belongs to the IspG family. The cofactor is [4Fe-4S] cluster.

It carries out the reaction (2E)-4-hydroxy-3-methylbut-2-enyl diphosphate + oxidized [flavodoxin] + H2O + 2 H(+) = 2-C-methyl-D-erythritol 2,4-cyclic diphosphate + reduced [flavodoxin]. It participates in isoprenoid biosynthesis; isopentenyl diphosphate biosynthesis via DXP pathway; isopentenyl diphosphate from 1-deoxy-D-xylulose 5-phosphate: step 5/6. Functionally, converts 2C-methyl-D-erythritol 2,4-cyclodiphosphate (ME-2,4cPP) into 1-hydroxy-2-methyl-2-(E)-butenyl 4-diphosphate. The protein is 4-hydroxy-3-methylbut-2-en-1-yl diphosphate synthase (flavodoxin) of Bacillus anthracis.